The following is a 182-amino-acid chain: MVESQFHSTTICAVEKDGKFAMAGDGQVTMGESVVMKGTAKKVRRIYNDEVVVGFAGSVADAFTLEEKFEGKLNEYNGNLTRAAVELAQEWRTQQSMQKLEAMLIVMNKEEMLLVSGTGEVITPDDGILAIGSGGNFALSAARAMKNFGDKEMPAKEIAKNALNIAADICVFTNHNIIVEEL.

Residue Thr-9 is part of the active site. The Na(+) site is built by Ala-167, Cys-170, and Thr-173.

Belongs to the peptidase T1B family. HslV subfamily. A double ring-shaped homohexamer of HslV is capped on each side by a ring-shaped HslU homohexamer. The assembly of the HslU/HslV complex is dependent on binding of ATP.

The protein localises to the cytoplasm. It carries out the reaction ATP-dependent cleavage of peptide bonds with broad specificity.. Its activity is regulated as follows. Allosterically activated by HslU binding. Protease subunit of a proteasome-like degradation complex believed to be a general protein degrading machinery. The chain is ATP-dependent protease subunit HslV from Enterococcus faecalis (strain ATCC 700802 / V583).